Here is a 576-residue protein sequence, read N- to C-terminus: Eukaryotic translation initiation factor 3 subunit D (576 aa).

A disordered region spans residues 103–176 (DSTKTRFGRG…KDYDKPQRNR (74 aa)). A compositionally biased stretch (gly residues) spans 110-122 (GRGGLARGRGQRG). Basic and acidic residues predominate over residues 165-176 (GWKDYDKPQRNR). The RNA gate stretch occupies residues 304–318 (TLDMVTVNENAADAP).

This sequence belongs to the eIF-3 subunit D family. As to quaternary structure, component of the eukaryotic translation initiation factor 3 (eIF-3) complex.

Its subcellular location is the cytoplasm. Its function is as follows. mRNA cap-binding component of the eukaryotic translation initiation factor 3 (eIF-3) complex, which is involved in protein synthesis of a specialized repertoire of mRNAs and, together with other initiation factors, stimulates binding of mRNA and methionyl-tRNAi to the 40S ribosome. The eIF-3 complex specifically targets and initiates translation of a subset of mRNAs involved in cell proliferation. In the eIF-3 complex, eif3d specifically recognizes and binds the 7-methylguanosine cap of a subset of mRNAs. This Botryotinia fuckeliana (strain B05.10) (Noble rot fungus) protein is Eukaryotic translation initiation factor 3 subunit D.